The following is a 593-amino-acid chain: Aspartate--tRNA(Asp/Asn) ligase (593 aa).

Glu176 is a binding site for L-aspartate. The interval 200–203 is aspartate; sequence QIFK. Arg222 is a binding site for L-aspartate. Residues 222–224 and Gln231 contribute to the ATP site; that span reads RDE. His450 contacts L-aspartate. Glu490 contacts ATP. Arg497 contributes to the L-aspartate binding site. Position 542-545 (542-545) interacts with ATP; that stretch reads GLDR.

Belongs to the class-II aminoacyl-tRNA synthetase family. Type 1 subfamily. Homodimer.

It is found in the cytoplasm. The enzyme catalyses tRNA(Asx) + L-aspartate + ATP = L-aspartyl-tRNA(Asx) + AMP + diphosphate. Its function is as follows. Aspartyl-tRNA synthetase with relaxed tRNA specificity since it is able to aspartylate not only its cognate tRNA(Asp) but also tRNA(Asn). Reaction proceeds in two steps: L-aspartate is first activated by ATP to form Asp-AMP and then transferred to the acceptor end of tRNA(Asp/Asn). The polypeptide is Aspartate--tRNA(Asp/Asn) ligase (Symbiobacterium thermophilum (strain DSM 24528 / JCM 14929 / IAM 14863 / T)).